We begin with the raw amino-acid sequence, 144 residues long: Large ribosomal subunit protein uL16 (144 aa).

This sequence belongs to the universal ribosomal protein uL16 family. Part of the 50S ribosomal subunit.

Binds 23S rRNA and is also seen to make contacts with the A and possibly P site tRNAs. This chain is Large ribosomal subunit protein uL16, found in Halalkalibacterium halodurans (strain ATCC BAA-125 / DSM 18197 / FERM 7344 / JCM 9153 / C-125) (Bacillus halodurans).